The primary structure comprises 111 residues: Class I hydrophobin 2 (111 aa).

The first 21 residues, 1–21 (MFSRVMFCTFLILPLLAAATA), serve as a signal peptide directing secretion. 4 disulfide bridges follow: Cys-30/Cys-90, Cys-37/Cys-84, Cys-38/Cys-71, and Cys-91/Cys-104.

This sequence belongs to the fungal hydrophobin family. Self-assembles to form functional amyloid fibrils called rodlets. Self-assembly into fibrillar rodlets occurs spontaneously at hydrophobic:hydrophilic interfaces and the rodlets further associate laterally to form amphipathic monolayers. Behavior depends on environmental conditions: (1) when the pH increases or in the presence of Ca(2+) ions, an assembled state, beta-sheet rich, is formed; (2) when the solvent polarity increases, the vhm2 shows an increased tendency to reach hydrophobic/hydrophilic interfaces, with no detectable conformational change; and (3) at high temperature, a reversible conformational change and reversible aggregation occur. The physical and chemical properties, both in solution and as a biofilm, are affected by polysaccharides that act as hydrophilic stabilizer.

It is found in the secreted. The protein resides in the cell wall. Its function is as follows. Aerial growth, conidiation, and dispersal of filamentous fungi in the environment rely upon a capability of their secreting small amphipathic proteins called hydrophobins (HPBs) with low sequence identity. Class I can self-assemble into an outermost layer of rodlet bundles on aerial cell surfaces, conferring cellular hydrophobicity that supports fungal growth, development and dispersal; whereas Class II form highly ordered films at water-air interfaces through intermolecular interactions but contribute nothing to the rodlet structure. Vmh2 is a class I hydrophobin involved in biofilm formation and is essential for the maintenance of the surface hydrophobicity of the mycelium. Seems not to be involved in hyphal resistance against environmental stress. This chain is Class I hydrophobin 2, found in Pleurotus ostreatus (strain PC15) (Oyster mushroom).